The following is a 732-amino-acid chain: MALLQRASYLRLYYLRLMGSRPRLFSSSLSPALHRHSSTLSSPPFSSPSPSFRLKFQLTSVLSQRLIQRNAISSRFLSTEASQETTTSKGYSSEQIQVLEGLDPVRKRPGMYIGSTGSRGLHHLVYEILDNAIDEAQAGYASKVDVVLHADGSVSVVDNGRGIPTDLHPATKKSSLETVLTVLHAGGKFGGTSSGYSVSGGLHGVGLSVVNALSEALEVSVWRDGMEHKQNYSRGKPITTLTCRVLPLESKGTKGTSIRFWPDKEVFTTAIEFDHNTIAGRIRELAFLNPKVTISLKKEDDDPEKTQYSEYSFAGGLTEYVSWLNTDKNPIHDVLGFRREINGATVDVALQWCSDAYSDTMLGYANSIRTIDGGTHIEGVKASLTRTLNTLAKKSKTVKEKDISLSGEHVREGLTCIVSVKVPNPEFEGQTKTRLGNPEVRKIVDQSVQEYLTEFLELHPDILESIISKSLNAYKAALAAKRARELVRSKSVLKSSSLPGKLADCSSTDPEVSEIFIVEGDSAGGSAKQGRDRRFQAILPLRGKILNIERKDEAAMYKNEEIQNLILGLGLGVKGEDFKKENLRYHKIIILTDADVDGAHIRTLLLTFFFRYQRALFDAGCIYVGVPPLFKVERGKNAQYCYDDADLKKITSNFPANASYNIQRFKGLGEMMPEQLWETTMNPETRILKQLVVDDIAEANMTFSSLMGARVDVRKELIKNAATRINLQRLDI.

The Toprim domain maps to S513–G620. Mg(2+) contacts are provided by E519, D593, and D595.

The protein belongs to the type II topoisomerase GyrB family. Made up of two chains. The A chain is responsible for DNA breakage and rejoining; the B chain catalyzes ATP hydrolysis. Requires Mg(2+) as cofactor. The cofactor is Mn(2+). Ca(2+) is required as a cofactor.

It is found in the mitochondrion. It carries out the reaction ATP-dependent breakage, passage and rejoining of double-stranded DNA.. Functionally, a type II topoisomerase that negatively supercoils closed circular double-stranded DNA in an ATP-dependent manner. This chain is DNA gyrase subunit B, mitochondrial (GYRBM), found in Arabidopsis thaliana (Mouse-ear cress).